Here is a 137-residue protein sequence, read N- to C-terminus: Large ribosomal subunit protein uL16 (137 aa).

Positions methionine 1–asparagine 17 are enriched in basic residues. The interval methionine 1–alanine 21 is disordered.

Belongs to the universal ribosomal protein uL16 family. As to quaternary structure, part of the 50S ribosomal subunit.

Its function is as follows. Binds 23S rRNA and is also seen to make contacts with the A and possibly P site tRNAs. The chain is Large ribosomal subunit protein uL16 from Nitrosococcus oceani (strain ATCC 19707 / BCRC 17464 / JCM 30415 / NCIMB 11848 / C-107).